A 132-amino-acid chain; its full sequence is Peptide methionine sulfoxide reductase MsrB (132 aa).

Positions 8–130 constitute a MsrB domain; it reads LDSWREELTE…NSASLKLVPR (123 aa). Zn(2+) is bound by residues C47, C50, C96, and C99. C119 (nucleophile) is an active-site residue.

This sequence belongs to the MsrB Met sulfoxide reductase family. The cofactor is Zn(2+).

The enzyme catalyses L-methionyl-[protein] + [thioredoxin]-disulfide + H2O = L-methionyl-(R)-S-oxide-[protein] + [thioredoxin]-dithiol. This is Peptide methionine sulfoxide reductase MsrB from Pseudomonas paraeruginosa (strain DSM 24068 / PA7) (Pseudomonas aeruginosa (strain PA7)).